The chain runs to 186 residues: uncharacterized protein (186 aa).

A run of 3 helical transmembrane segments spans residues 43–63 (GAWVIHIVLIAALRLIFHAIP), 69–89 (LAWTLTNLTYMAGSFIMFHWV), and 143–163 (WMFLVNIWALFMVLIPKLPAV).

Its subcellular location is the endoplasmic reticulum membrane. This is an uncharacterized protein from Schizosaccharomyces pombe (strain 972 / ATCC 24843) (Fission yeast).